Here is a 248-residue protein sequence, read N- to C-terminus: Probable transcriptional regulatory protein BBta_6910 (248 aa).

It belongs to the TACO1 family.

Its subcellular location is the cytoplasm. In Bradyrhizobium sp. (strain BTAi1 / ATCC BAA-1182), this protein is Probable transcriptional regulatory protein BBta_6910.